The sequence spans 633 residues: Probable potassium transport system protein Kup (633 aa).

Transmembrane regions (helical) follow at residues 21 to 41, 61 to 81, 112 to 132, 149 to 169, 176 to 196, 217 to 237, 258 to 278, 290 to 310, 348 to 368, 377 to 397, 398 to 418, and 430 to 450; these read MLVA…LYTL, ILSL…MMFV, LLVV…MITP, GIDH…FLIQ, IGIL…ALGV, FFMV…LALT, WFLL…ALLL, LLAP…ATVI, IYIG…VIGF, AYGV…SAVM, LLLW…FLLV, and IVQG…LMTT.

It belongs to the HAK/KUP transporter (TC 2.A.72) family.

The protein localises to the cell inner membrane. It carries out the reaction K(+)(in) + H(+)(in) = K(+)(out) + H(+)(out). Functionally, transport of potassium into the cell. Likely operates as a K(+):H(+) symporter. The polypeptide is Probable potassium transport system protein Kup (Pseudomonas fluorescens (strain Pf0-1)).